We begin with the raw amino-acid sequence, 346 residues long: Phosphoribosylformylglycinamidine cyclo-ligase (346 aa).

It belongs to the AIR synthase family.

The protein resides in the cytoplasm. The enzyme catalyses 2-formamido-N(1)-(5-O-phospho-beta-D-ribosyl)acetamidine + ATP = 5-amino-1-(5-phospho-beta-D-ribosyl)imidazole + ADP + phosphate + H(+). It functions in the pathway purine metabolism; IMP biosynthesis via de novo pathway; 5-amino-1-(5-phospho-D-ribosyl)imidazole from N(2)-formyl-N(1)-(5-phospho-D-ribosyl)glycinamide: step 2/2. This is Phosphoribosylformylglycinamidine cyclo-ligase from Methylobacillus flagellatus (strain ATCC 51484 / DSM 6875 / VKM B-1610 / KT).